The chain runs to 347 residues: Spermatogenesis associated 6-like protein (347 aa).

The interval 115 to 199 is disordered; sequence SKSHGQRVQA…ENNLEHCSKK (85 aa). Residues 116–125 are compositionally biased toward polar residues; it reads KSHGQRVQAT. The span at 153-166 shows a compositional bias: basic residues; sequence LHLHRPTQRNHGKS. The segment covering 170–183 has biased composition (basic and acidic residues); sequence PGERKPPFVVRHVD. A phosphoserine mark is found at S218 and S221. The disordered stretch occupies residues 234 to 285; the sequence is ERIVLKSQPPPPVDSSESRKPSLSHQGDASLHTETSVTTSQLSRPPSPLNQP. Residues 254–277 show a composition bias toward polar residues; that stretch reads PSLSHQGDASLHTETSVTTSQLSR.

This sequence belongs to the SPATA6 family.

In Mus musculus (Mouse), this protein is Spermatogenesis associated 6-like protein (Spata6l).